Consider the following 878-residue polypeptide: Leucine--tRNA ligase (878 aa).

Positions 56–66 (PYPSGKLHMGH) match the 'HIGH' region motif. Residues 630–634 (KMSKS) carry the 'KMSKS' region motif. Lysine 633 contributes to the ATP binding site.

The protein belongs to the class-I aminoacyl-tRNA synthetase family.

Its subcellular location is the cytoplasm. It catalyses the reaction tRNA(Leu) + L-leucine + ATP = L-leucyl-tRNA(Leu) + AMP + diphosphate. In Prochlorococcus marinus (strain MIT 9303), this protein is Leucine--tRNA ligase.